We begin with the raw amino-acid sequence, 126 residues long: Large ribosomal subunit protein uL22 (126 aa).

Belongs to the universal ribosomal protein uL22 family. Part of the 50S ribosomal subunit.

Functionally, this protein binds specifically to 23S rRNA; its binding is stimulated by other ribosomal proteins, e.g. L4, L17, and L20. It is important during the early stages of 50S assembly. It makes multiple contacts with different domains of the 23S rRNA in the assembled 50S subunit and ribosome. The globular domain of the protein is located near the polypeptide exit tunnel on the outside of the subunit, while an extended beta-hairpin is found that lines the wall of the exit tunnel in the center of the 70S ribosome. The sequence is that of Large ribosomal subunit protein uL22 from Bradyrhizobium sp. (strain BTAi1 / ATCC BAA-1182).